The sequence spans 104 residues: Type VII secretion system extracellular protein B (104 aa).

This sequence belongs to the WXG100 family. Homodimer. When mixed with EsxA does not form heterodimers.

Its subcellular location is the secreted. Virulence factor that is important for the establishment of infection in the host. EsxB is required for EsxA synthesis as well as secretion. Mediates together with EsxA the release of S.aureus from the host cell. Also inhibits host cytokine production and thus modulates dendritic cell-mediated immunity. This is Type VII secretion system extracellular protein B from Staphylococcus aureus (strain Mu50 / ATCC 700699).